An 894-amino-acid polypeptide reads, in one-letter code: Low-affinity phosphate transporter PHO91 (894 aa).

The SPX domain occupies 1-256 (MKFSHSLQFN…NTNLKQNYLN (256 aa)). Disordered regions lie at residues 124–160 (QHQL…LTDM) and 293–321 (RPSN…EDGN). Basic residues predominate over residues 132–144 (RNRKSKSQQRQRR). Polar residues predominate over residues 151-160 (TDSNPSLTDM). Phosphoserine occurs at positions 295, 311, and 312. 13 helical membrane passes run 430 to 450 (LKFL…LTPF), 474 to 494 (TIPL…FPVI), 511 to 531 (FILS…FTLA), 557 to 577 (FILL…SNVA), 602 to 622 (ALIL…PIAS), 642 to 662 (FMIA…LLII), 682 to 702 (FTLK…LWCL), 706 to 726 (ISGI…VFFG), 738 to 758 (FMWT…AVSS), 777 to 797 (PIFI…TFVS), 799 to 819 (TVAA…LPSG), 824 to 844 (LLIV…TSGF), and 874 to 894 (SLLS…VMGF).

The protein belongs to the CitM (TC 2.A.11) transporter family. In terms of processing, ubiquitinated by RSP5. RSP5-mediated ubiquitination initiates internalization and degradation by the endocytic pathway.

It localises to the vacuole membrane. Its function is as follows. Vacuolar phosphate transporter that probably exports phosphate from the vacuolar lumen to the cytosol. This Saccharomyces cerevisiae (strain ATCC 204508 / S288c) (Baker's yeast) protein is Low-affinity phosphate transporter PHO91 (PHO91).